Here is a 176-residue protein sequence, read N- to C-terminus: Ribosome rescue factor SmrB (176 aa).

The region spanning 93 to 168 (LDLHGYRQSE…GDAALLVLID (76 aa)) is the Smr domain.

The protein belongs to the SmrB family. In terms of assembly, associates with collided ribosomes, but not with correctly translating polysomes.

In terms of biological role, acts as a ribosome collision sensor. Detects stalled/collided disomes (pairs of ribosomes where the leading ribosome is stalled and a second ribosome has collided with it) and endonucleolytically cleaves mRNA at the 5' boundary of the stalled ribosome. Stalled/collided disomes form a new interface (primarily via the 30S subunits) that binds SmrB. Cleaved mRNA becomes available for tmRNA ligation, leading to ribosomal subunit dissociation and rescue of stalled ribosomes. This Shewanella baltica (strain OS223) protein is Ribosome rescue factor SmrB.